The primary structure comprises 132 residues: Ribosome-binding factor A (132 aa).

Belongs to the RbfA family. As to quaternary structure, monomer. Binds 30S ribosomal subunits, but not 50S ribosomal subunits or 70S ribosomes.

It is found in the cytoplasm. Functionally, one of several proteins that assist in the late maturation steps of the functional core of the 30S ribosomal subunit. Associates with free 30S ribosomal subunits (but not with 30S subunits that are part of 70S ribosomes or polysomes). Required for efficient processing of 16S rRNA. May interact with the 5'-terminal helix region of 16S rRNA. This chain is Ribosome-binding factor A, found in Rhizorhabdus wittichii (strain DSM 6014 / CCUG 31198 / JCM 15750 / NBRC 105917 / EY 4224 / RW1) (Sphingomonas wittichii).